Here is a 519-residue protein sequence, read N- to C-terminus: Cytosol aminopeptidase (519 aa).

A Phosphoserine modification is found at serine 42. Residue lysine 45 is modified to N6-succinyllysine. Phosphoserine is present on serine 54. Residues lysine 61 and lysine 103 each carry the N6-succinyllysine modification. Phosphoserine is present on residues serine 180 and serine 194. 3 residues coordinate Zn(2+): leucine 202, methionine 203, and threonine 205. An N6-acetyllysine; alternate modification is found at lysine 221. The residue at position 221 (lysine 221) is an N6-succinyllysine; alternate. A Phosphoserine modification is found at serine 238. Lysine 282 and aspartate 287 together coordinate Zn(2+). Residues lysine 282, aspartate 287, serine 292, and lysine 294 each coordinate substrate. Aspartate 287 is a binding site for Mg(2+). Residue lysine 294 is part of the active site. The Zn(2+) site is built by arginine 303, aspartate 305, aspartate 364, and glutamate 366. Substrate-binding residues include aspartate 305 and aspartate 364. Mg(2+) is bound by residues aspartate 364 and glutamate 366. Residue arginine 368 is part of the active site. The residue at position 455 (lysine 455) is an N6-acetyllysine; alternate. The residue at position 455 (lysine 455) is an N6-succinyllysine; alternate. An N6-succinyllysine modification is found at lysine 476. Residue lysine 489 is modified to N6-acetyllysine; alternate. Lysine 489 carries the N6-succinyllysine; alternate modification.

Belongs to the peptidase M17 family. As to quaternary structure, homohexamer. Requires Zn(2+) as cofactor. It depends on Mn(2+) as a cofactor.

It is found in the cytoplasm. It carries out the reaction Release of an N-terminal amino acid, Xaa-|-Yaa-, in which Xaa is preferably Leu, but may be other amino acids including Pro although not Arg or Lys, and Yaa may be Pro. Amino acid amides and methyl esters are also readily hydrolyzed, but rates on arylamides are exceedingly low.. The enzyme catalyses an S-substituted L-cysteinylglycine + H2O = an S-substituted L-cysteine + glycine. The catalysed reaction is L-cysteinylglycine + H2O = L-cysteine + glycine. It catalyses the reaction S-benzyl-L-cysteinylglycine + H2O = S-benzyl-L-cysteine + glycine. It carries out the reaction Release of N-terminal proline from a peptide.. Functionally, cytosolic metallopeptidase that catalyzes the removal of unsubstituted N-terminal hydrophobic amino acids from various peptides. The presence of Zn(2+) ions is essential for the peptidase activity, and the association with other cofactors can modulate the substrate spectificity of the enzyme. For instance, in the presence of Mn(2+), it displays a specific Cys-Gly hydrolyzing activity of Cys-Gly-S-conjugates. Involved in the metabolism of glutathione and in the degradation of glutathione S-conjugates, which may play a role in the control of the cell redox status. In Homo sapiens (Human), this protein is Cytosol aminopeptidase.